A 355-amino-acid polypeptide reads, in one-letter code: Nematocyst expressed protein 3 (355 aa).

The N-terminal stretch at 1–18 (MKLTYILLIAVVGVAIEA) is a signal peptide. ShKT domains follow at residues 50 to 89 (CKDV…CKLC), 107 to 134 (QPQQ…CQLC), and 140 to 182 (SGPV…CNTY). 6 disulfide bridges follow: cysteine 50-cysteine 89, cysteine 57-cysteine 82, cysteine 71-cysteine 86, cysteine 116-cysteine 131, cysteine 149-cysteine 175, and cysteine 158-cysteine 179. Residues 92–355 (KRSKKQSDYM…KKSKSHKKQH (264 aa)) constitute a propeptide that is removed on maturation. The interval 202 to 355 (YQPNAMPTPP…KKSKSHKKQH (154 aa)) is disordered. A compositionally biased stretch (pro residues) spans 207–221 (MPTPPQGVTPAPLPP). Low complexity-rich tracts occupy residues 222-232 (YFQQQGYGYPQ), 240-270 (VQPG…TTTE), and 277-332 (TEAA…AQSD). Residues 335-355 (NKKKHKKDKAQKKSKSHKKQH) show a composition bias toward basic residues.

This sequence belongs to the NEP3 family. As to expression, nematocytes. In late planulae, transcripts are found throughout the ectoderm in nematocytes, with high concentration of expressing cells in the oral pole. In primary polyps, is expressed in nematocytes in the body wall and physa ectoderm and in the upper and lower pharynx.

Its subcellular location is the nematocyst. It is found in the secreted. Neurotoxin. In vivo, induces pronounced contraction and tail twitching on zebrafish larvae, as well as death 5 hours later. The protein is Nematocyst expressed protein 3 of Nematostella vectensis (Starlet sea anemone).